Reading from the N-terminus, the 147-residue chain is DNA-directed RNA polymerase I subunit rpa14 (147 aa).

The segment at 71–147 is disordered; the sequence is VQGPPTEELI…TQGVGEKEQS (77 aa). The span at 74–84 shows a compositional bias: low complexity; that stretch reads PPTEELIIPPE. The segment covering 87 to 111 has biased composition (basic and acidic residues); it reads LETKEEESLKHAREENDDLHLDKET. Basic residues predominate over residues 112–124; the sequence is KKRLKKEKKKAAR. Residues 125-135 show a composition bias toward basic and acidic residues; it reads REKEEARKAKA.

Component of the RNA polymerase I (Pol I) complex consisting of 14 subunits. Part of a Pol I subcomplex consisting of the subunits A14 and A43. Interacts with rpa43. In terms of processing, phosphorylated.

The protein localises to the nucleus. The protein resides in the nucleolus. DNA-dependent RNA polymerase catalyzes the transcription of DNA into RNA using the four ribonucleoside triphosphates as substrates. Component of RNA polymerase I which synthesizes ribosomal RNA precursors. A14 seems to play a role in the stability of Pol I subunit A43 and association of rrn3 to Pol I. The protein is DNA-directed RNA polymerase I subunit rpa14 (ker1) of Schizosaccharomyces pombe (strain 972 / ATCC 24843) (Fission yeast).